A 982-amino-acid polypeptide reads, in one-letter code: Filament-like plant protein 4 (982 aa).

Coiled-coil stretches lie at residues 39–83 and 125–291; these read DQYT…VAKE and EDRA…RKKL. Residues 311 to 333 form a disordered region; sequence DHRQDHRQRRSPVRPSSPLMSPM. A compositionally biased stretch (low complexity) spans 323–333; it reads VRPSSPLMSPM. Residues 345–401 adopt a coiled-coil conformation; the sequence is DNMQKFHKENDLLTERLLAMEEETKMLKEALAKRNSELQVSRNLCAKTANRLQTLEA. The segment covering 423 to 433 has biased composition (polar residues); that stretch reads QNASNPPSMAS. Disordered stretches follow at residues 423 to 466 and 687 to 711; these read QNAS…AKIK and QKDSSGEHYQNGCSQSSDSEIPDDC. The stretch at 452–475 forms a coiled coil; sequence ELSQSNKDKANAKIKKTESANQLE. Over residues 457–466 the composition is skewed to basic and acidic residues; that stretch reads NKDKANAKIK. A compositionally biased stretch (polar residues) spans 693–705; sequence EHYQNGCSQSSDS. A coiled-coil region spans residues 722-885; sequence ATCKFTTEEF…AECQETILLL (164 aa). Polar residues-rich tracts occupy residues 896-910 and 918-943; these read TEQVASSPSQEQQAL and ATSTNPQDSKLSSPSDKDTPSMNTMK. Residues 896-982 form a disordered region; sequence TEQVASSPSQ…FSRFFSTKAK (87 aa).

This sequence belongs to the FPP family. As to quaternary structure, interacts with WPP/MAF proteins.

The sequence is that of Filament-like plant protein 4 (FPP4) from Arabidopsis thaliana (Mouse-ear cress).